The primary structure comprises 456 residues: tRNA modification GTPase MnmE (456 aa).

(6S)-5-formyl-5,6,7,8-tetrahydrofolate is bound by residues Arg24, Glu81, and Lys120. A TrmE-type G domain is found at 216–379; the sequence is GMTVVIAGRP…LREHLKACMG (164 aa). A K(+)-binding site is contributed by Asn226. Residues 226 to 231, 245 to 251, 270 to 273, 335 to 338, and 359 to 361 contribute to the GTP site; these read NAGKSS, TEIAGTT, DTAG, NKAD, and SAR. Ser230 serves as a coordination point for Mg(2+). The K(+) site is built by Thr245, Ile247, and Thr250. Residue Thr251 participates in Mg(2+) binding. Lys456 is a binding site for (6S)-5-formyl-5,6,7,8-tetrahydrofolate.

The protein belongs to the TRAFAC class TrmE-Era-EngA-EngB-Septin-like GTPase superfamily. TrmE GTPase family. Homodimer. Heterotetramer of two MnmE and two MnmG subunits. K(+) serves as cofactor.

The protein resides in the cytoplasm. Its function is as follows. Exhibits a very high intrinsic GTPase hydrolysis rate. Involved in the addition of a carboxymethylaminomethyl (cmnm) group at the wobble position (U34) of certain tRNAs, forming tRNA-cmnm(5)s(2)U34. In Pseudomonas savastanoi pv. phaseolicola (strain 1448A / Race 6) (Pseudomonas syringae pv. phaseolicola (strain 1448A / Race 6)), this protein is tRNA modification GTPase MnmE.